The following is a 102-amino-acid chain: NADH-quinone oxidoreductase subunit K (102 aa).

Helical transmembrane passes span 2 to 22 (LDFY…GVIL), 26 to 46 (IFTI…IFAT), and 58 to 78 (VIVM…LALI).

The protein belongs to the complex I subunit 4L family. As to quaternary structure, NDH-1 is composed of 14 different subunits. Subunits NuoA, H, J, K, L, M, N constitute the membrane sector of the complex.

Its subcellular location is the cell inner membrane. It catalyses the reaction a quinone + NADH + 5 H(+)(in) = a quinol + NAD(+) + 4 H(+)(out). Its function is as follows. NDH-1 shuttles electrons from NADH, via FMN and iron-sulfur (Fe-S) centers, to quinones in the respiratory chain. The immediate electron acceptor for the enzyme in this species is believed to be ubiquinone. Couples the redox reaction to proton translocation (for every two electrons transferred, four hydrogen ions are translocated across the cytoplasmic membrane), and thus conserves the redox energy in a proton gradient. This is NADH-quinone oxidoreductase subunit K from Campylobacter fetus subsp. fetus (strain 82-40).